The chain runs to 142 residues: DNA-directed RNA polymerase II subunit RPB4 (142 aa).

This sequence belongs to the eukaryotic RPB4 RNA polymerase subunit family. In terms of assembly, component of the RNA polymerase II (Pol II) core complex consisting of 12 subunits: a ten-subunit catalytic core composed of POLR2A/RPB1, POLR2B/RPB2, POLR2C/RPB3, POLR2I/RPB9, POLR2J/RPB11, POLR2E/RPABC1, POLR2F/RPABC2, POLR2H/RPABC3, POLR2K/RPABC4 and POLR2L/RPABC5 and a mobile stalk composed of two subunits POLR2D/RPB4 and POLR2G/RPB7, protruding from the core and functioning primarily in transcription initiation. Part of Pol II(G) complex, in which Pol II core associates with an additional subunit POLR2M; unlike conventional Pol II, Pol II(G) functions as a transcriptional repressor. Part of TBP-based Pol II pre-initiation complex (PIC), in which Pol II core assembles with general transcription factors and other specific initiation factors including GTF2E1, GTF2E2, GTF2F1, GTF2F2, TCEA1, ERCC2, ERCC3, GTF2H2, GTF2H3, GTF2H4, GTF2H5, GTF2A1, GTF2A2, GTF2B and TBP; this large multi-subunit PIC complex mediates DNA unwinding and targets Pol II core to the transcription start site where the first phosphodiester bond forms.

It is found in the nucleus. In terms of biological role, core component of RNA polymerase II (Pol II), a DNA-dependent RNA polymerase which synthesizes mRNA precursors and many functional non-coding RNAs using the four ribonucleoside triphosphates as substrates. Pol II is the central component of the basal RNA polymerase II transcription machinery. It is composed of mobile elements that move relative to each other. POLR2D/RPB4 is part of a subcomplex with POLR2G/RPB7 that binds to a pocket formed by POLR2A/RPB1, POLR2B/RPB2 and POLR2F/RPABC2 at the base of the clamp element. The POLR2D/RPB4-POLR2G/RPB7 subcomplex seems to lock the clamp via POLR2G/RPB7 in the closed conformation thus preventing double-stranded DNA to enter the active site cleft. The POLR2D/RPB4-POLR2G/RPB7 subcomplex binds single-stranded DNA and RNA. The sequence is that of DNA-directed RNA polymerase II subunit RPB4 (POLR2D) from Homo sapiens (Human).